A 467-amino-acid polypeptide reads, in one-letter code: Pentatricopeptide repeat-containing protein At1g77170, mitochondrial (467 aa).

Residues 1–30 constitute a mitochondrion transit peptide; the sequence is MFFSGLISKLHVHGTKRTNHFTIFHRLNHF. PPR repeat units follow at residues 81–115, 116–150, 151–181, 182–216, 217–251, 254–284, 285–319, 320–350, and 356–386; these read IAFL…TVLP, DRYS…GFVG, DEFC…NPER, KLGS…GLEP, DDFT…KTEE, DIMM…MRQR, NVVS…GVRP, NKIT…MKSE, and GLSH…MPMK. The segment at 391–466 is type E motif; it reads VWGCLMGGCE…IPAYSYASTT (76 aa).

This sequence belongs to the PPR family. PCMP-E subfamily.

It localises to the mitochondrion. In Arabidopsis thaliana (Mouse-ear cress), this protein is Pentatricopeptide repeat-containing protein At1g77170, mitochondrial (PCMP-E21).